The primary structure comprises 137 residues: BolA-like protein 1 (137 aa).

A Phosphoserine modification is found at serine 81. The segment at 115 to 137 (RENPQLDISPPCLGGSKKTRGTS) is disordered.

The protein belongs to the BolA/IbaG family. Interacts with GLRX5.

It is found in the mitochondrion. Its function is as follows. Acts as a mitochondrial iron-sulfur (Fe-S) cluster assembly factor that facilitates (Fe-S) cluster insertion into a subset of mitochondrial proteins. Probably acts together with the monothiol glutaredoxin GLRX5. May protect cells against oxidative stress. This is BolA-like protein 1 (Bola1) from Mus musculus (Mouse).